The sequence spans 697 residues: Sodium-dependent phosphate transport protein 2B (697 aa).

Positions 1–45 (MAPWPELENAQPNPGKFIEGASGPQSSIPAKDKEASKTNDNGTPV) are disordered. At 1–91 (MAPWPELENA…WSERDTKGKT (91 aa)) the chain is on the cytoplasmic side. A helical transmembrane segment spans residues 92–112 (LCIFQGVGKFILLLGFLYLFV). Residues 113-136 (CSLDVLSSAFQLVGGKVAGQFFSN) are Extracellular-facing. A helical membrane pass occupies residues 137–157 (NSIMSNPVAGLVIGVLVTVMV). The Cytoplasmic segment spans residues 158–213 (QSSSTSSSIIVSMVASSLLTVRAAIPIIMGANIGTSITNTIVALMQAGDRNEFRRA). A helical membrane pass occupies residues 214 to 234 (FAGATVHDFFNWLSVFVLLPL). Residues 235–363 (EAATHYLEIL…FVNFSLPDLA (129 aa)) are Extracellular-facing. Asparagine 295, asparagine 308, asparagine 321, and asparagine 356 each carry an N-linked (GlcNAc...) asparagine glycan. Cysteine 303 and cysteine 350 are oxidised to a cystine. A helical membrane pass occupies residues 364 to 384 (VGIILLTVSLVVLCGCLIMIV). Residues 385 to 408 (KLLGSVLRGQVATVIKKTLNTDFP) are Cytoplasmic-facing. A helical membrane pass occupies residues 409 to 429 (FPFAWLTGYLAILVGAGMTFI). Topologically, residues 430-486 (VQSSSVFTSAMTPLIGIGVISIERAYPLTLGSNIGTTTTAILAALASPGNTLRSSLQ) are extracellular. Residues 487-507 (IALCHFFFNISGILLWYPIPF) traverse the membrane as a helical segment. Residues 508–526 (TRLPIRLAKGLGNISAKYR) are Cytoplasmic-facing. A helical membrane pass occupies residues 527–547 (WFAVFYLIFFFFVTPLTVFGL). Topologically, residues 548–551 (SLAG) are extracellular. A helical transmembrane segment spans residues 552–572 (WPVLVGVGVPIILLLLLVLCL). Topologically, residues 573–696 (RMLQFRCPRI…SMKALSNTTV (124 aa)) are cytoplasmic.

It belongs to the SLC34A transporter family. Highly abundant in the ileum of small intestine, whereas it is almost absent in the duodenum and in the jejunum.

It localises to the apical cell membrane. It catalyses the reaction 3 Na(+)(out) + phosphate(out) = 3 Na(+)(in) + phosphate(in). Functionally, involved in actively transporting phosphate into cells via Na(+) cotransport. The protein is Sodium-dependent phosphate transport protein 2B (Slc34a2) of Mus musculus (Mouse).